The primary structure comprises 337 residues: DNA-directed RNA polymerase subunit alpha (337 aa).

The alpha N-terminal domain (alpha-NTD) stretch occupies residues 1-233; that stretch reads MVREEVTIST…NLFIPFLHAE (233 aa). Residues 266 to 337 are alpha C-terminal domain (alpha-CTD); the sequence is GIALKCIFID…FAMNLPKDFF (72 aa).

Belongs to the RNA polymerase alpha chain family. In plastids the minimal PEP RNA polymerase catalytic core is composed of four subunits: alpha, beta, beta', and beta''. When a (nuclear-encoded) sigma factor is associated with the core the holoenzyme is formed, which can initiate transcription.

It is found in the plastid. It localises to the chloroplast. It carries out the reaction RNA(n) + a ribonucleoside 5'-triphosphate = RNA(n+1) + diphosphate. Its function is as follows. DNA-dependent RNA polymerase catalyzes the transcription of DNA into RNA using the four ribonucleoside triphosphates as substrates. This chain is DNA-directed RNA polymerase subunit alpha, found in Ceratophyllum demersum (Rigid hornwort).